Here is a 381-residue protein sequence, read N- to C-terminus: GDP-mannose transporter (381 aa).

Residues 1 to 44 are Cytoplasmic-facing; sequence MAEGKKTDDYTIQMDSIDQGNKSFEAPPPPQPRSPPSGSLSNNP. Residues 19-41 are disordered; that stretch reads QGNKSFEAPPPPQPRSPPSGSLS. The span at 26–35 shows a compositional bias: pro residues; that stretch reads APPPPQPRSP. Residues 45 to 65 traverse the membrane as a helical segment; sequence ILPVLAYCGSSILMTVMNKYV. Residues 66–70 lie on the Lumenal side of the membrane; that stretch reads LSGTD. The helical transmembrane segment at 71–91 threads the bilayer; sequence FNLNFFLLCIQSLVCIIAIQT. The Cytoplasmic segment spans residues 92 to 109; that stretch reads CKSCGLITYRDFSADEAR. A helical membrane pass occupies residues 110-126; that stretch reads KWFPITLLLIGMIYTGS. The Lumenal segment spans residues 127-133; sequence KALQFLS. Residues 134–150 traverse the membrane as a helical segment; the sequence is IPVYTIFKNLTIILIAY. The Cytoplasmic segment spans residues 151-159; it reads GEVLWFGGS. A helical transmembrane segment spans residues 160 to 181; it reads VTGLTLFSFGLMVLSSIIAAWA. At 182–199 the chain is on the lumenal side; sequence DIKHAVESNGDATAKVST. A helical membrane pass occupies residues 200–220; that stretch reads LNAGYIWMLVNCLCTSSYVLG. Over 221–234 the chain is Cytoplasmic; that stretch reads MRKRIKLTNFKDFD. The chain crosses the membrane as a helical span at residues 235-255; the sequence is TMFYNNLLSIPVLIVLSAFLE. Residues 256-273 lie on the Lumenal side of the membrane; the sequence is DWSSTNVNRNFPPMDRNS. The helical transmembrane segment at 274 to 294 threads the bilayer; that stretch reads IVFAMILSGLSSVFISYTSAW. Topologically, residues 295 to 302 are cytoplasmic; it reads CVRVTSST. Residues 303 to 323 traverse the membrane as a helical segment; sequence TYSMVGALNKLPIAISGLIFF. At 324–326 the chain is on the lumenal side; that stretch reads DAP. The helical transmembrane segment at 327 to 347 threads the bilayer; it reads VTFPSVSAIVVGFVSGIVYAV. Residues 348–381 lie on the Cytoplasmic side of the membrane; sequence AKIKQNAKPRTGVLPTANPPVSASSQSMRDSLRS. Residues 358–381 form a disordered region; it reads TGVLPTANPPVSASSQSMRDSLRS. Positions 366 to 381 are enriched in polar residues; it reads PPVSASSQSMRDSLRS.

It belongs to the TPT transporter family. SLC35D subfamily. In terms of assembly, homooligomer.

The protein resides in the golgi apparatus membrane. It localises to the cytoplasmic vesicle membrane. It is found in the endoplasmic reticulum membrane. Functionally, involved in the import of GDP-mannose from the cytoplasm into the Golgi lumen. In Aspergillus niger (strain ATCC MYA-4892 / CBS 513.88 / FGSC A1513), this protein is GDP-mannose transporter (gmt1).